The primary structure comprises 302 residues: 1,2-dihydroxynaphthalene dioxygenase (302 aa).

VOC domains lie at 9–124 and 149–270; these read ELGY…IFWG and GLGH…PGWR. His-152 provides a ligand contact to Fe cation. Residues His-152, 199-200, His-215, and Tyr-256 each bind substrate; that span reads DH. His-215 contributes to the Fe cation binding site. Glu-266 lines the Fe cation pocket.

This sequence belongs to the extradiol ring-cleavage dioxygenase family. Fe(2+) serves as cofactor.

It catalyses the reaction naphthalene-1,2-diol + O2 = 2-hydroxychromene-2-carboxylate + H(+). It functions in the pathway aromatic compound metabolism; naphthalene degradation. In terms of biological role, involved in the naphthalene catabolic pathway. Catalyzes the meta-cleavage of 1,2-dihydroxynaphthalene (1,2-DHN) to yield 2-hydroxychromene-2-carboxylic acid. In Pseudomonas putida (Arthrobacter siderocapsulatus), this protein is 1,2-dihydroxynaphthalene dioxygenase (nahC).